Here is a 293-residue protein sequence, read N- to C-terminus: MDIALAIKALILGIVEGLTEFLPISSTGHLILAGQLLDFNDEKGKIFEIVIQFGAILAVCWEFRHKIIDVIKGLPNDPRQQRFALNVIVATIPAITLALIFGKAIKAHLFNPIVVASAFIIGGLVILWAEWRERHRGQTHDPRGNALLEAAKAGAPRVETLDDLRLSDAFKVGLAQCFALIPGTSRSGSTIIGGLLFGLSRKVATEFSFFLAIPVIFGATVYELYKERALLSTDDLSIFGIGFVAAFISAFFCVRWLLRFIASHDFRGFAWYRIVFGVIVLVTAYTHLIAWQA.

A run of 7 helical transmembrane segments spans residues 3–23, 43–63, 85–105, 109–129, 203–223, 238–258, and 269–289; these read IALA…EFLP, KGKI…CWEF, LNVI…GKAI, LFNP…ILWA, VATE…TVYE, IFGI…RWLL, and FAWY…THLI.

Belongs to the UppP family.

Its subcellular location is the cell inner membrane. The enzyme catalyses di-trans,octa-cis-undecaprenyl diphosphate + H2O = di-trans,octa-cis-undecaprenyl phosphate + phosphate + H(+). Its function is as follows. Catalyzes the dephosphorylation of undecaprenyl diphosphate (UPP). Confers resistance to bacitracin. In Ralstonia nicotianae (strain ATCC BAA-1114 / GMI1000) (Ralstonia solanacearum), this protein is Undecaprenyl-diphosphatase.